We begin with the raw amino-acid sequence, 216 residues long: Glycerol-3-phosphate acyltransferase 3 (216 aa).

The next 5 helical transmembrane spans lie at 6–26 (LLLV…YLVS), 58–78 (LVAA…GLVI), 92–112 (ILFA…WPVF), 125–145 (FGGM…VLII), and 158–178 (ITGV…SGFP).

The protein belongs to the PlsY family. In terms of assembly, probably interacts with PlsX.

The protein localises to the cell membrane. The catalysed reaction is an acyl phosphate + sn-glycerol 3-phosphate = a 1-acyl-sn-glycero-3-phosphate + phosphate. The protein operates within lipid metabolism; phospholipid metabolism. Catalyzes the transfer of an acyl group from acyl-phosphate (acyl-PO(4)) to glycerol-3-phosphate (G3P) to form lysophosphatidic acid (LPA). This enzyme utilizes acyl-phosphate as fatty acyl donor, but not acyl-CoA or acyl-ACP. This Dehalococcoides mccartyi (strain ATCC BAA-2266 / KCTC 15142 / 195) (Dehalococcoides ethenogenes (strain 195)) protein is Glycerol-3-phosphate acyltransferase 3.